The chain runs to 103 residues: uncharacterized protein (103 aa).

Disordered stretches follow at residues 1 to 20 and 44 to 71; these read MIELSYAPDVAGRRSNWPKG and LERMASDTHGGGGGRPVTPPPPGMHHLG. The signal sequence occupies residues 1–34; sequence MIELSYAPDVAGRRSNWPKGSGVNTWTAIRWTFA.

This is an uncharacterized protein from Mycobacterium tuberculosis (strain CDC 1551 / Oshkosh).